Here is a 146-residue protein sequence, read N- to C-terminus: MQKTSMLTKEEAIKNRKWYLVDASGLVLGKLAVKAANLIRGKNKANFTPNQDCGDHLIIINSDQVVLTGNKKDNEFWYHHSQYMGGIKKTSGRDMINKNSDKLVFNAVKGMLPDNRLSRRLITKVHVFKNDKHNMEAQKPTLLNWS.

This sequence belongs to the universal ribosomal protein uL13 family. In terms of assembly, part of the 50S ribosomal subunit.

Its function is as follows. This protein is one of the early assembly proteins of the 50S ribosomal subunit, although it is not seen to bind rRNA by itself. It is important during the early stages of 50S assembly. The sequence is that of Large ribosomal subunit protein uL13 from Mycoplasma genitalium (strain ATCC 33530 / DSM 19775 / NCTC 10195 / G37) (Mycoplasmoides genitalium).